The following is a 294-amino-acid chain: Glycine--tRNA ligase alpha subunit (294 aa).

The protein belongs to the class-II aminoacyl-tRNA synthetase family. In terms of assembly, tetramer of two alpha and two beta subunits.

Its subcellular location is the cytoplasm. It catalyses the reaction tRNA(Gly) + glycine + ATP = glycyl-tRNA(Gly) + AMP + diphosphate. This is Glycine--tRNA ligase alpha subunit from Lawsonia intracellularis (strain PHE/MN1-00).